We begin with the raw amino-acid sequence, 587 residues long: Aspartate--tRNA ligase (587 aa).

Glu-174 contributes to the L-aspartate binding site. The tract at residues 198–201 is aspartate; that stretch reads QITK. Arg-220 contributes to the L-aspartate binding site. ATP is bound by residues 220 to 222 and Gln-229; that span reads RDE. His-443 lines the L-aspartate pocket. Glu-477 is a binding site for ATP. Arg-484 is a binding site for L-aspartate. 529-532 is a binding site for ATP; the sequence is GLDR.

The protein belongs to the class-II aminoacyl-tRNA synthetase family. Type 1 subfamily. Homodimer.

The protein localises to the cytoplasm. The catalysed reaction is tRNA(Asp) + L-aspartate + ATP = L-aspartyl-tRNA(Asp) + AMP + diphosphate. Its function is as follows. Catalyzes the attachment of L-aspartate to tRNA(Asp) in a two-step reaction: L-aspartate is first activated by ATP to form Asp-AMP and then transferred to the acceptor end of tRNA(Asp). This is Aspartate--tRNA ligase from Streptococcus pneumoniae (strain Taiwan19F-14).